The chain runs to 192 residues: MAFVAIEGIDGSGKSTVISLLEKKLPRVYATREPSSGPIGRLIKEWALKGGSVDPHVDALLFAADRIEHYKREIEPRVREGYIVISERYIESSIAYQGAAGVSREFVKYINSLVPKPDLTIILDVDPSIAEARIRQRGGAEKYEYLSFLRKVREIYLARAAEEGYPVIDASRRPEEVAADVAELIKRVVRFK.

Residue 8–15 participates in ATP binding; it reads GIDGSGKS.

It belongs to the thymidylate kinase family.

The enzyme catalyses dTMP + ATP = dTDP + ADP. This Pyrobaculum aerophilum (strain ATCC 51768 / DSM 7523 / JCM 9630 / CIP 104966 / NBRC 100827 / IM2) protein is Probable thymidylate kinase.